Reading from the N-terminus, the 307-residue chain is Glycerol-3-phosphate dehydrogenase [NAD(P)+] (307 aa).

4 residues coordinate NADPH: Trp14, Arg34, Arg35, and Lys82. 2 residues coordinate sn-glycerol 3-phosphate: Lys82 and Gly110. Ser114 serves as a coordination point for NADPH. The sn-glycerol 3-phosphate site is built by Lys165, Asp218, Ser228, Arg229, and Asn230. Lys165 functions as the Proton acceptor in the catalytic mechanism. Arg229 contacts NADPH. An NADPH-binding site is contributed by Glu255.

The protein belongs to the NAD-dependent glycerol-3-phosphate dehydrogenase family.

It is found in the cytoplasm. It carries out the reaction sn-glycerol 3-phosphate + NAD(+) = dihydroxyacetone phosphate + NADH + H(+). It catalyses the reaction sn-glycerol 3-phosphate + NADP(+) = dihydroxyacetone phosphate + NADPH + H(+). Its pathway is membrane lipid metabolism; glycerophospholipid metabolism. Its function is as follows. Catalyzes the reduction of the glycolytic intermediate dihydroxyacetone phosphate (DHAP) to sn-glycerol 3-phosphate (G3P), the key precursor for phospholipid synthesis. This is Glycerol-3-phosphate dehydrogenase [NAD(P)+] from Nostoc sp. (strain PCC 7120 / SAG 25.82 / UTEX 2576).